Reading from the N-terminus, the 385-residue chain is 1-deoxy-D-xylulose 5-phosphate reductoisomerase (385 aa).

Residues Ser-10, Gly-11, Ser-12, Ile-13, Gly-36, Asn-38, and Asn-124 each contribute to the NADPH site. Lys-125 lines the 1-deoxy-D-xylulose 5-phosphate pocket. Glu-126 contacts NADPH. Asp-150 provides a ligand contact to Mn(2+). Ser-151, Glu-152, Ser-176, and His-198 together coordinate 1-deoxy-D-xylulose 5-phosphate. A Mn(2+)-binding site is contributed by Glu-152. Position 204 (Gly-204) interacts with NADPH. 4 residues coordinate 1-deoxy-D-xylulose 5-phosphate: Ser-211, Asn-216, Lys-217, and Glu-220. Glu-220 contributes to the Mn(2+) binding site.

Belongs to the DXR family. It depends on Mg(2+) as a cofactor. The cofactor is Mn(2+).

The enzyme catalyses 2-C-methyl-D-erythritol 4-phosphate + NADP(+) = 1-deoxy-D-xylulose 5-phosphate + NADPH + H(+). It functions in the pathway isoprenoid biosynthesis; isopentenyl diphosphate biosynthesis via DXP pathway; isopentenyl diphosphate from 1-deoxy-D-xylulose 5-phosphate: step 1/6. Catalyzes the NADPH-dependent rearrangement and reduction of 1-deoxy-D-xylulose-5-phosphate (DXP) to 2-C-methyl-D-erythritol 4-phosphate (MEP). This Endomicrobium trichonymphae protein is 1-deoxy-D-xylulose 5-phosphate reductoisomerase.